The following is a 352-amino-acid chain: Photosystem II D2 protein (352 aa).

The helical transmembrane segment at 40 to 60 (CAYLALGGWLTGTSFVTSWYT) threads the bilayer. His117 provides a ligand contact to chlorophyll a. Residues 124-140 (GFMLRQFEIARLVGVRP) form a helical membrane-spanning segment. Residues Gln129 and Asn142 each coordinate pheophytin a. The chain crosses the membrane as a helical span at residues 152–165 (VFVSVFLMYPLGQS). A chlorophyll a-binding site is contributed by His197. Residues 207–227 (GALLCAIHGATVENTLFEDSE) traverse the membrane as a helical segment. Residues His214 and Phe261 each coordinate a plastoquinone. His214 lines the Fe cation pocket. Residue His268 participates in Fe cation binding. Residues 278-294 (GLWMSSIGIVGLALNLR) form a helical membrane-spanning segment.

Belongs to the reaction center PufL/M/PsbA/D family. In terms of assembly, PSII is composed of 1 copy each of membrane proteins PsbA, PsbB, PsbC, PsbD, PsbE, PsbF, PsbH, PsbI, PsbJ, PsbK, PsbL, PsbM, PsbT, PsbX, PsbY, PsbZ, Psb30/Ycf12, peripheral proteins PsbO, CyanoQ (PsbQ), PsbU, PsbV and a large number of cofactors. It forms dimeric complexes. The D1/D2 heterodimer binds P680, chlorophylls that are the primary electron donor of PSII, and subsequent electron acceptors. It shares a non-heme iron and each subunit binds pheophytin, quinone, additional chlorophylls, carotenoids and lipids. There is also a Cl(-1) ion associated with D1 and D2, which is required for oxygen evolution. The PSII complex binds additional chlorophylls, carotenoids and specific lipids. serves as cofactor.

The protein localises to the cellular thylakoid membrane. The catalysed reaction is 2 a plastoquinone + 4 hnu + 2 H2O = 2 a plastoquinol + O2. Functionally, photosystem II (PSII) is a light-driven water:plastoquinone oxidoreductase that uses light energy to abstract electrons from H(2)O, generating O(2) and a proton gradient subsequently used for ATP formation. It consists of a core antenna complex that captures photons, and an electron transfer chain that converts photonic excitation into a charge separation. The D1/D2 (PsbA/PsbD) reaction center heterodimer binds P680, the primary electron donor of PSII as well as several subsequent electron acceptors. D2 is needed for assembly of a stable PSII complex. The protein is Photosystem II D2 protein of Synechococcus elongatus (strain ATCC 33912 / PCC 7942 / FACHB-805) (Anacystis nidulans R2).